The primary structure comprises 238 residues: Acyl-protein thioesterase 1 (238 aa).

Catalysis depends on charge relay system residues Ser-120, Asp-174, and His-219.

It belongs to the AB hydrolase superfamily. AB hydrolase 2 family.

The protein localises to the cytoplasm. The protein resides in the nucleus. The catalysed reaction is S-hexadecanoyl-L-cysteinyl-[protein] + H2O = L-cysteinyl-[protein] + hexadecanoate + H(+). Functionally, hydrolyzes fatty acids from S-acylated cysteine residues in proteins with a strong preference for palmitoylated G-alpha proteins over other acyl substrates. Mediates the deacylation of G-alpha proteins such as GPA1 in vivo, but has weak or no activity toward palmitoylated Ras proteins. Has weak lysophospholipase activity in vitro; however such activity may not exist in vivo. In Cryptococcus neoformans var. neoformans serotype D (strain B-3501A) (Filobasidiella neoformans), this protein is Acyl-protein thioesterase 1.